The following is a 192-amino-acid chain: MEYRSLMLDDFLSRFQLLRPQINRETLNHRQAAVLIPIVRRPQPGLLLTQRSIHLRKHAGQVAFPGGAVDDTDASVIAAALREAEEEVAIPPSAVEVIGVLPPVDSVTGYQVTPVVGIIPPDLPYRASEDEVSAVFEMPLAQALHLGRYHPLDIYRRGDSHRVWLSWYEQYFVWGMTAGIIRELALQIGVKP.

The Nudix hydrolase domain occupies 29 to 160 (HRQAAVLIPI…PLDIYRRGDS (132 aa)). Residues 67-89 (GAVDDTDASVIAAALREAEEEVA) carry the Nudix box motif. Mg(2+) is bound by residues glutamate 83 and glutamate 87.

It belongs to the Nudix hydrolase family. PCD1 subfamily. Requires Mn(2+) as cofactor. Mg(2+) serves as cofactor.

Probably mediates the hydrolysis of some nucleoside diphosphate derivatives. This is an uncharacterized protein from Shigella sonnei (strain Ss046).